Here is a 309-residue protein sequence, read N- to C-terminus: tRNA dimethylallyltransferase (309 aa).

13–20 is an ATP binding site; sequence GPTGAGKT. 15–20 lines the substrate pocket; sequence TGAGKT. 2 interaction with substrate tRNA regions span residues 38–41 and 162–166; these read DSRQ and QRVTR.

Belongs to the IPP transferase family. In terms of assembly, monomer. It depends on Mg(2+) as a cofactor.

The enzyme catalyses adenosine(37) in tRNA + dimethylallyl diphosphate = N(6)-dimethylallyladenosine(37) in tRNA + diphosphate. In terms of biological role, catalyzes the transfer of a dimethylallyl group onto the adenine at position 37 in tRNAs that read codons beginning with uridine, leading to the formation of N6-(dimethylallyl)adenosine (i(6)A). In Nitratidesulfovibrio vulgaris (strain ATCC 29579 / DSM 644 / CCUG 34227 / NCIMB 8303 / VKM B-1760 / Hildenborough) (Desulfovibrio vulgaris), this protein is tRNA dimethylallyltransferase.